A 358-amino-acid chain; its full sequence is 3-dehydroquinate synthase (358 aa).

Residues 105 to 109 (GVVGD), 129 to 130 (TT), Lys-142, Lys-151, and 169 to 172 (TLKT) each bind NAD(+). Glu-184, His-245, and His-262 together coordinate Zn(2+).

This sequence belongs to the sugar phosphate cyclases superfamily. Dehydroquinate synthase family. The cofactor is NAD(+). Requires Co(2+) as cofactor. It depends on Zn(2+) as a cofactor.

Its subcellular location is the cytoplasm. The enzyme catalyses 7-phospho-2-dehydro-3-deoxy-D-arabino-heptonate = 3-dehydroquinate + phosphate. Its pathway is metabolic intermediate biosynthesis; chorismate biosynthesis; chorismate from D-erythrose 4-phosphate and phosphoenolpyruvate: step 2/7. Its function is as follows. Catalyzes the conversion of 3-deoxy-D-arabino-heptulosonate 7-phosphate (DAHP) to dehydroquinate (DHQ). The protein is 3-dehydroquinate synthase of Enterococcus faecalis (strain ATCC 47077 / OG1RF).